The primary structure comprises 304 residues: Ribosome-inactivating protein 9 (304 aa).

Residue Glu-208 is part of the active site.

This sequence belongs to the ribosome-inactivating protein family. Type 1 RIP subfamily. Monomer. In terms of tissue distribution, accumulates to high levels in seeds.

The protein resides in the cytoplasm. The catalysed reaction is Endohydrolysis of the N-glycosidic bond at one specific adenosine on the 28S rRNA.. Its function is as follows. Possesses features of some constitutive defense agent. The coordinate Opaque-2-controlled synthesis of this protein and the major seed storage proteins (zeins) may provide the germinating seedling with both nutritional benefits and protection against pathogen invasion of the surrounding endosperm. In Zea mays (Maize), this protein is Ribosome-inactivating protein 9 (CRIP9).